Consider the following 601-residue polypeptide: Beta-phellandrene synthase (601 aa).

Residues 1-35 (MSTISIHHVGILRNPLPSKNKRALINNPWSLSLPR) constitute a chloroplast transit peptide. Aspartate 356 and aspartate 360 together coordinate Mn(2+). Residues 356–360 (DDVYD) carry the DDXXD motif motif. Homodimerization stretches follow at residues 362-368 (YGTLDEL) and 434-471 (EAKW…LSIP). The Mn(2+) site is built by aspartate 499 and glutamate 507.

The protein belongs to the terpene synthase family. As to quaternary structure, homodimer. It depends on Mn(2+) as a cofactor. The cofactor is Mg(2+). As to expression, expressed in peltate glandular trichomes. Present at low levels in flowers, leaves and stems.

It localises to the plastid. Its subcellular location is the chloroplast. It carries out the reaction (2E)-geranyl diphosphate = beta-phellandrene + diphosphate. It catalyses the reaction (2E)-geranyl diphosphate = (1R,5R)-sabinene + diphosphate. It functions in the pathway secondary metabolite biosynthesis; terpenoid biosynthesis. Its function is as follows. Involved in the biosynthesis of phenolic monoterpenes natural products. Monoterpene synthase that catalyzes mainly the formation of olefins such as sabinene and beta-phellandrene, and minor amounts of other monoterpenes (e.g. myrcene, gamma-terpinene, alpha-thujene and alpha-pinene) from geranyl diphosphate (GPP). This chain is Beta-phellandrene synthase, found in Origanum vulgare (Wild marjoram).